The sequence spans 202 residues: Small ribosomal subunit protein uS4c (202 aa).

In terms of domain architecture, S4 RNA-binding spans 90–153 (MRLDNIIFRL…KSEAIISKNI (64 aa)).

It belongs to the universal ribosomal protein uS4 family. As to quaternary structure, part of the 30S ribosomal subunit. Contacts protein S5. The interaction surface between S4 and S5 is involved in control of translational fidelity.

The protein localises to the plastid. It localises to the chloroplast. Functionally, one of the primary rRNA binding proteins, it binds directly to 16S rRNA where it nucleates assembly of the body of the 30S subunit. With S5 and S12 plays an important role in translational accuracy. This Leucodon sciuroides (Moss) protein is Small ribosomal subunit protein uS4c (rps4).